A 113-amino-acid polypeptide reads, in one-letter code: uncharacterized protein (113 aa).

It to H.pylori HP0245/JHP0230.

This is an uncharacterized protein from Campylobacter jejuni subsp. jejuni serotype O:2 (strain ATCC 700819 / NCTC 11168).